The primary structure comprises 230 residues: Response regulator MprA (230 aa).

Positions 4 to 118 (RILVVDDDRA…ELLARMRALL (115 aa)) constitute a Response regulatory domain. Residue D48 is modified to 4-aspartylphosphate. Positions 129 to 227 (SMAMRFSDLT…VRGVGYVLRE (99 aa)) form a DNA-binding region, ompR/PhoB-type.

Phosphorylated and dephosphorylated by MprB.

The protein resides in the cytoplasm. Functionally, member of the two-component regulatory system MprB/MprA which contributes to maintaining a balance among several systems involved in stress resistance and is required for establishment and maintenance of persistent infection in the host. Functions as a transcriptional regulator that recognizes a 19-bp nucleotide motif comprizing two loosely conserved 8-bp direct DNA-binding motif repeats separated by a 3-bp spacer region. This Mycobacterium tuberculosis (strain ATCC 25177 / H37Ra) protein is Response regulator MprA (mprA).